The chain runs to 759 residues: Polyribonucleotide nucleotidyltransferase (759 aa).

2 residues coordinate Mg(2+): Asp522 and Asp528. A KH domain is found at 588–647 (PRITTIKVPVDKIGEVIGPKGKMINSITEETGASISIEDDGTVFVGASNGEAAQAAIDKI). An S1 motif domain is found at 659 to 728 (GERFLGTVVK…NRGKISLVLV (70 aa)). The segment at 734-759 (AEASDNGSATPSDKAPATADATTAGN) is disordered. Residues 741–759 (SATPSDKAPATADATTAGN) are compositionally biased toward low complexity.

It belongs to the polyribonucleotide nucleotidyltransferase family. Mg(2+) is required as a cofactor.

Its subcellular location is the cytoplasm. The enzyme catalyses RNA(n+1) + phosphate = RNA(n) + a ribonucleoside 5'-diphosphate. Involved in mRNA degradation. Catalyzes the phosphorolysis of single-stranded polyribonucleotides processively in the 3'- to 5'-direction. This Mycobacterium sp. (strain JLS) protein is Polyribonucleotide nucleotidyltransferase.